Reading from the N-terminus, the 101-residue chain is Putative UPF0377 protein YBL108W (101 aa).

The protein belongs to the UPF0377 family.

The sequence is that of Putative UPF0377 protein YBL108W from Saccharomyces cerevisiae (strain ATCC 204508 / S288c) (Baker's yeast).